The sequence spans 393 residues: Chalcone synthase G (393 aa).

The active site involves Cys-164.

The protein belongs to the thiolase-like superfamily. Chalcone/stilbene synthases family. Expressed in seedlings after illumination with UV light. No expression detectable in flowers. It is not known for sure whether CHSG encodes a chalcone synthase or a very closely related condensing enzyme.

It carries out the reaction (E)-4-coumaroyl-CoA + 3 malonyl-CoA + 3 H(+) = 2',4,4',6'-tetrahydroxychalcone + 3 CO2 + 4 CoA. It functions in the pathway secondary metabolite biosynthesis; flavonoid biosynthesis. In terms of biological role, the primary product of this enzyme is 4,2',4',6'-tetrahydroxychalcone (also termed naringenin-chalcone or chalcone) which can under specific conditions spontaneously isomerize into naringenin. In Petunia hybrida (Petunia), this protein is Chalcone synthase G (CHSG).